The chain runs to 1121 residues: tRNA (34-2'-O)-methyltransferase regulator WDR6 (1121 aa).

Position 1 is an N-acetylmethionine (Met-1). WD repeat units lie at residues 53–97 (IKRV…VVKI), 105–143 (RELW…LYDP), 147–189 (CILQ…VWYP), 200–238 (APDR…IWKV), 247–285 (RVQN…VWSH), 289–327 (ILQA…LWHL), 335–376 (LGVS…LYDV), 381–422 (WEQL…VVPI), 425–470 (PTAA…ISAA), 476–520 (IFVK…LFPS), 559–598 (PVST…FVRD), 604–642 (VLRQ…VWNP), 645–684 (HEKL…LYRA), 739–785 (LTDI…VWGI), 848–893 (HNRH…LFLL), 901–946 (QLLA…FWDL), 970–1012 (GTPS…VFVL), 1036–1073 (EEYS…FWRL), and 1079–1121 (TFMN…NWYD).

It belongs to the WD repeat WDR6 family. Interacts with FTSJ1; the interaction is direct, and required for 2'-O-methylation of position 34 in substrate tRNAs. Interacts with IRS4. Interacts with STK11/LKB1.

It localises to the cytoplasm. Together with methyltransferase FTSJ1, methylates the 2'-O-ribose of nucleotides at position 34 of the tRNA anticodon loop of substrate tRNAs. Required for the correct positioning of the substrate tRNA for methylation. Required to suppress amino acid starvation-induced autophagy. Enhances the STK11/LKB1-induced cell growth suppression activity. The sequence is that of tRNA (34-2'-O)-methyltransferase regulator WDR6 (WDR6) from Pongo abelii (Sumatran orangutan).